The following is a 257-amino-acid chain: MRTGVIAKKMGMTRLFQDDGRHVPVTVLSLEGCQVVSVRDKERDGYVAVQLGAGTAKAKNVAKPQRGAYGKAEVEPKAKLVEFRVADDATLDVGAELSADHFVAGQMVDIQGVTQGKGFAGAMKRWGFGGMRATHGVSISHRAHGSTGNRQDPGRVFKNKKMAGHMGARNRTQQNLEIVRTDAERGLLFVKGSVPGSKGGWLLVRDAVKLPRHPEAPYPASIKSAANTNTAPADAPVETPAEEAVVDTAATDGAQES.

Glutamine 151 is subject to N5-methylglutamine. A disordered region spans residues 218–257; that stretch reads YPASIKSAANTNTAPADAPVETPAEEAVVDTAATDGAQES. The segment covering 225-236 has biased composition (low complexity); sequence AANTNTAPADAP.

It belongs to the universal ribosomal protein uL3 family. As to quaternary structure, part of the 50S ribosomal subunit. Forms a cluster with proteins L14 and L19. In terms of processing, methylated by PrmB.

In terms of biological role, one of the primary rRNA binding proteins, it binds directly near the 3'-end of the 23S rRNA, where it nucleates assembly of the 50S subunit. This chain is Large ribosomal subunit protein uL3, found in Sphingopyxis alaskensis (strain DSM 13593 / LMG 18877 / RB2256) (Sphingomonas alaskensis).